Here is a 519-residue protein sequence, read N- to C-terminus: Serine/threonine-protein kinase RIO3 (519 aa).

2 positions are modified to phosphoserine: Ser-8 and Ser-112. Tyr-122 bears the Phosphotyrosine mark. Positions 122-159 (YEDSDSSEDEVDWQDTRDDPYRPAKPIPTPKKGFIGKG) are disordered. Over residues 124-134 (DSDSSEDEVDW) the composition is skewed to acidic residues. A phosphoserine mark is found at Ser-125, Ser-127, and Ser-128. Residues 251 to 519 (ETITGCISTG…DGGPPILYDE (269 aa)) enclose the Protein kinase domain. Residues 257-265 (ISTGKESVV) and Lys-290 contribute to the ATP site. Asp-406 (proton acceptor) is an active-site residue.

It belongs to the protein kinase superfamily. RIO-type Ser/Thr kinase family. In terms of assembly, interacts with CASP10. Interacts with IRF3; RIOK3 probably mediates the interaction of TBK1 with IRF3. Associated with 40S pre-ribosomal particles. Requires Mg(2+) as cofactor. Post-translationally, autophosphorylated (in vitro).

Its subcellular location is the cytoplasm. The enzyme catalyses L-seryl-[protein] + ATP = O-phospho-L-seryl-[protein] + ADP + H(+). The catalysed reaction is L-threonyl-[protein] + ATP = O-phospho-L-threonyl-[protein] + ADP + H(+). Involved in regulation of type I interferon (IFN)-dependent immune response which plays a critical role in the innate immune response against DNA and RNA viruses. May act as an adapter protein essential for the recruitment of TBK1 to IRF3. Phosphorylates IFIH1 within the C-terminal region interfering with IFIH1 filament assembly on long dsRNA and resulting in attenuated IFIH1-signaling. Can inhibit CASP10 isoform 7-mediated activation of the NF-kappaB signaling pathway. May play a role in the biogenesis of the 40S ribosomal subunit. Involved in the processing of 21S pre-rRNA to the mature 18S rRNA. In Bos taurus (Bovine), this protein is Serine/threonine-protein kinase RIO3 (RIOK3).